The primary structure comprises 93 residues: Pyrimidine/purine nucleoside phosphorylase (93 aa).

Belongs to the nucleoside phosphorylase PpnP family.

The enzyme catalyses a purine D-ribonucleoside + phosphate = a purine nucleobase + alpha-D-ribose 1-phosphate. It carries out the reaction adenosine + phosphate = alpha-D-ribose 1-phosphate + adenine. It catalyses the reaction cytidine + phosphate = cytosine + alpha-D-ribose 1-phosphate. The catalysed reaction is guanosine + phosphate = alpha-D-ribose 1-phosphate + guanine. The enzyme catalyses inosine + phosphate = alpha-D-ribose 1-phosphate + hypoxanthine. It carries out the reaction thymidine + phosphate = 2-deoxy-alpha-D-ribose 1-phosphate + thymine. It catalyses the reaction uridine + phosphate = alpha-D-ribose 1-phosphate + uracil. The catalysed reaction is xanthosine + phosphate = alpha-D-ribose 1-phosphate + xanthine. Catalyzes the phosphorolysis of diverse nucleosides, yielding D-ribose 1-phosphate and the respective free bases. Can use uridine, adenosine, guanosine, cytidine, thymidine, inosine and xanthosine as substrates. Also catalyzes the reverse reactions. The polypeptide is Pyrimidine/purine nucleoside phosphorylase (Photobacterium profundum (strain SS9)).